The primary structure comprises 198 residues: Nucleoid occlusion factor SlmA (198 aa).

The HTH tetR-type domain maps to 10–70 (NRREEILQSL…SLIEFIEDSL (61 aa)). Residues 33–52 (TTAKLAASVGVSEAALYRHF) constitute a DNA-binding region (H-T-H motif). Residues 117–144 (EQDRLQGRINQLFERIEAQLRQVLREKR) adopt a coiled-coil conformation.

The protein belongs to the nucleoid occlusion factor SlmA family. As to quaternary structure, homodimer. Interacts with FtsZ.

The protein localises to the cytoplasm. It is found in the nucleoid. In terms of biological role, required for nucleoid occlusion (NO) phenomenon, which prevents Z-ring formation and cell division over the nucleoid. Acts as a DNA-associated cell division inhibitor that binds simultaneously chromosomal DNA and FtsZ, and disrupts the assembly of FtsZ polymers. SlmA-DNA-binding sequences (SBS) are dispersed on non-Ter regions of the chromosome, preventing FtsZ polymerization at these regions. The sequence is that of Nucleoid occlusion factor SlmA from Escherichia coli O127:H6 (strain E2348/69 / EPEC).